Reading from the N-terminus, the 224-residue chain is Cysteine S-methyltransferase NleE (224 aa).

Positions 49–52 (GITR) are interaction with host proteins TAB2, TAB3 and ZRANB3. Ala-92, Ser-98, Arg-107, Gln-111, Tyr-204, and Glu-208 together coordinate S-adenosyl-L-methionine.

The protein belongs to the NleE/OspZ family. In terms of assembly, monomer.

Its subcellular location is the secreted. The protein localises to the host nucleus. It catalyses the reaction L-cysteinyl-[protein] + S-adenosyl-L-methionine = S-methyl-L-cysteinyl-[protein] + S-adenosyl-L-homocysteine + H(+). Cysteine methyltransferase effector that inhibits host cell NF-kappa-B activation by preventing nuclear translocation of host protein RELA/p65. Acts by mediating cysteine methylation of host proteins TAB2 and TAB3: methylation of a conserved cysteine residue of the RanBP2-type zinc finger (NZF) of TAB2 and TAB3 disrupts zinc-binding, thereby inactivating the ubiquitin chain-binding activity of TAB2 and TAB3, leading to NF-kappa-B inactivation. Also mediates cysteine methylation of host protein ZRANB3, inactivating its ability to bind ubiquitin chains. The polypeptide is Cysteine S-methyltransferase NleE (Escherichia coli O157:H7).